The following is a 90-amino-acid chain: Probable Fe(2+)-trafficking protein (90 aa).

It belongs to the Fe(2+)-trafficking protein family.

In terms of biological role, could be a mediator in iron transactions between iron acquisition and iron-requiring processes, such as synthesis and/or repair of Fe-S clusters in biosynthetic enzymes. This chain is Probable Fe(2+)-trafficking protein, found in Coxiella burnetii (strain CbuG_Q212) (Coxiella burnetii (strain Q212)).